The primary structure comprises 504 residues: Anaerobic nitric oxide reductase transcription regulator NorR (504 aa).

Asp-57 carries the post-translational modification 4-aspartylphosphate. The Sigma-54 factor interaction domain occupies Met-187–Val-416. Residues Gly-215–Glu-222 and Ala-278–Glu-287 each bind ATP. The segment at residues Trp-479–Lys-498 is a DNA-binding region (H-T-H motif).

The protein operates within nitrogen metabolism; nitric oxide reduction. Functionally, required for the expression of anaerobic nitric oxide (NO) reductase, acts as a transcriptional activator for at least the norVW operon. Activation also requires sigma-54. In Escherichia coli O9:H4 (strain HS), this protein is Anaerobic nitric oxide reductase transcription regulator NorR.